The primary structure comprises 348 residues: UDP-glucose 4-epimerase (348 aa).

Residue threonine 125 coordinates substrate. Catalysis depends on tyrosine 149, which acts as the Proton acceptor.

This sequence belongs to the NAD(P)-dependent epimerase/dehydratase family. NAD(+) serves as cofactor.

The catalysed reaction is UDP-alpha-D-glucose = UDP-alpha-D-galactose. It participates in carbohydrate metabolism; galactose metabolism. Its pathway is glycan metabolism; exopolysaccharide biosynthesis. This is UDP-glucose 4-epimerase (exoB) from Azospirillum brasilense.